Here is a 397-residue protein sequence, read N- to C-terminus: Keratinocyte differentiation factor 1 (397 aa).

A compositionally biased stretch (pro residues) spans 1–16; sequence MPRPGQPRPSSGPPRL. Disordered regions lie at residues 1–67, 130–158, and 192–214; these read MPRP…SAEP, EHNG…MGSS, and LAEP…RGSE. The segment covering 44–55 has biased composition (basic and acidic residues); that stretch reads RPDPKDPGHHGP. Polar residues predominate over residues 201-211; the sequence is SLPSTFTNSPR. Ser218 bears the Phosphoserine mark. 2 disordered regions span residues 304–339 and 361–392; these read ISTR…TMLG and ARKL…GAPL. Over residues 321–330 the composition is skewed to low complexity; it reads ARSTAPAAAP. Positions 375 to 388 are enriched in polar residues; that stretch reads SQDSSFQGTDTDSS.

It is found in the cytoplasm. Its subcellular location is the cell junction. In terms of biological role, plays a role in the regulation of the epidermis formation during early development. Required both as an inhibitor of basal cell proliferation and a promoter of differentiation of basal progenitor cell progeny. The polypeptide is Keratinocyte differentiation factor 1 (Kdf1) (Mus musculus (Mouse)).